The sequence spans 430 residues: MIDGKTANEIFDSIRQHIIAGTLRAEDSLPPVRELASELKVNRNTVAAAYKRLITAGLAQSLGRNGTVIKGSPSPVALEGGDPHTPLHDLSGGNPDPQRLPDLSRYFARLSRTPHLYGDAPVSPELHAWAARWLRDATPVAGEIDITSGAIDAIERLLCAHLLPGDSVAVEDPCFLSSINMLRYAGFSASPVSVDSEGMQPEKLERALNQGARAVILTPRAHNPTGCSLSARRAAALQNMLARYPQVVVIIDDHFALLSSSPWQPVIAQTTQHWAVIRSVSKTLGPDLRLAIVASDSATSAKLRLRLNAGSQWVSHLLQDLVYACLTDPEYQHRLTQTRLFYAARQQKLARALQQYGIAISPGDGVNAWLPLDTHSQATAFTLAKSGWLVREGEAFGVSAPSHGLRITLSTLNDSEINTLAADIHQALNR.

The HTH gntR-type domain occupies 4–72 (GKTANEIFDS…GRNGTVIKGS (69 aa)). The segment at residues 32 to 51 (VRELASELKVNRNTVAAAYK) is a DNA-binding region (H-T-H motif). The disordered stretch occupies residues 70–95 (KGSPSPVALEGGDPHTPLHDLSGGNP). The residue at position 282 (Lys282) is an N6-(pyridoxal phosphate)lysine.

The protein in the C-terminal section; belongs to the class-I pyridoxal-phosphate-dependent aminotransferase family. As to quaternary structure, homodimer in both apo- and holo-forms.

Its function is as follows. Acts as a transcriptional repressor of the pdxK gene, encoding a pyridoxal kinase involved in the vitamin B6 salvage pathway. Also represses transcription of its own gene. Binds to the ptsJ-pdxK intergenic region, but does not bind pdxY and pdxH promoters. Among all six B6 vitamers, only pyridoxal 5'-phosphate (PLP) clearly binds to the protein and acts as an effector molecule for PtsJ, inducing a protein conformational change that increases affinity for DNA. Thus, PLP stabilizes protein-DNA interactions, reinforcing repression. The chain is Vitamin B6 salvage pathway transcriptional repressor PtsJ from Salmonella typhimurium (strain LT2 / SGSC1412 / ATCC 700720).